The following is a 243-amino-acid chain: MALDIYPAIDLKEGKAVRLFKGDMQSATIYGEALEFAKMFEDMGAKWLHIVDLDGAFAGIPQNLKYIEEILRTTHLQIQIGGGIRNEERIRLYMDLGVSRVILGSIAIKNWEFVKTMAHSYPIAVGIDAREGKVAVQGWAKESDICSSVLAEKFAGSEVQAIICTDINRDGALSGINVSFTQDIACRSGIYTIASGGFASSNELEILDENPYISGVIIGKAFYEGKINLKEALALFENKKVKI.

Residue D10 is the Proton acceptor of the active site. D128 serves as the catalytic Proton donor.

The protein belongs to the HisA/HisF family.

It localises to the cytoplasm. It catalyses the reaction 1-(5-phospho-beta-D-ribosyl)-5-[(5-phospho-beta-D-ribosylamino)methylideneamino]imidazole-4-carboxamide = 5-[(5-phospho-1-deoxy-D-ribulos-1-ylimino)methylamino]-1-(5-phospho-beta-D-ribosyl)imidazole-4-carboxamide. It participates in amino-acid biosynthesis; L-histidine biosynthesis; L-histidine from 5-phospho-alpha-D-ribose 1-diphosphate: step 4/9. The chain is 1-(5-phosphoribosyl)-5-[(5-phosphoribosylamino)methylideneamino] imidazole-4-carboxamide isomerase from Helicobacter hepaticus (strain ATCC 51449 / 3B1).